The chain runs to 65 residues: Ringhalexin (65 aa).

Cystine bridges form between Cys3–Cys24, Cys17–Cys42, Cys46–Cys57, and Cys58–Cys63.

In terms of tissue distribution, expressed by the venom gland.

Its subcellular location is the secreted. Its function is as follows. Has anticoagulant activity, since it is able to inhibit the activation of coagulation factor X (F10) by coagulation factor VIIa (F7) (IC(50)=123.8 nM). Also shows weak irreversible neurotoxicity. The protein is Ringhalexin of Hemachatus haemachatus (Rinkhals).